Reading from the N-terminus, the 370-residue chain is MKIKDAKKPSFPWFGMDIGGTLVKLSYFEPIDITAEEEQEEVESLKSIRKYLTSNVAYGSTGIRDVHLELKDLTLFGRRGNLHFIRFPTQDLPTFIQMGRDKNFSTLHTVLCATGGGAYKFEKDFRTIGNLHLHKLDELDCLVKGLLYIDSVSFNGQAECYYFANASEPERCQKMPFNLDDPYPLLVVNIGSGVSILAVHSKDNYKRVTGTSLGGGTFLGLCSLLTGCESFEEALEMASKGDSTQADKLVRDIYGGDYERFGLPGWAVASSFGNMIYKEKRESVSKEDLARATLVTITNNIGSIARMCAVNEKINRVVFVGNFLRVNTLSMKLLAYALDYWSKGQLKALFLEHEGYFGAVGALLGLPNFS.

Glutamate 138 functions as the Proton acceptor in the catalytic mechanism. Residues serine 192, serine 195, and arginine 207 each contribute to the acetyl-CoA site.

Belongs to the type II pantothenate kinase family. Homodimer.

It localises to the cytoplasm. It catalyses the reaction (R)-pantothenate + ATP = (R)-4'-phosphopantothenate + ADP + H(+). Its pathway is cofactor biosynthesis; coenzyme A biosynthesis; CoA from (R)-pantothenate: step 1/5. With respect to regulation, subject to allosteric regulation, exists in two distinct conformational states, a catalytically incompetent (or open) conformation stabilized by the binding of acetyl(acyl)-CoA, and a catalytically competent (or closed) conformation stabilized by ATP-binding. Inhibited by acetyl-CoA and its thioesters which act as allosteric inhibitors and compete with the ATP-binding site. In terms of biological role, catalyzes the phosphorylation of pantothenate to generate 4'-phosphopantothenate in the first and rate-determining step of coenzyme A (CoA) synthesis. The protein is Pantothenate kinase 3 (PANK3) of Bos taurus (Bovine).